The chain runs to 411 residues: Acetyl-coenzyme A carboxylase carboxyl transferase subunit beta, chloroplastic (411 aa).

The region spanning 32–302 (LWTRCDHCGV…KEQGRIPYGE (271 aa)) is the CoA carboxyltransferase N-terminal domain. Zn(2+) contacts are provided by Cys36, Cys39, Cys55, and Cys58. The C4-type zinc finger occupies 36–58 (CDHCGVILYIKHLKENQRVCFGC).

Belongs to the AccD/PCCB family. As to quaternary structure, acetyl-CoA carboxylase is a heterohexamer composed of biotin carboxyl carrier protein, biotin carboxylase and 2 subunits each of ACCase subunit alpha and ACCase plastid-coded subunit beta (accD). Zn(2+) is required as a cofactor.

It is found in the plastid. It localises to the chloroplast stroma. It carries out the reaction N(6)-carboxybiotinyl-L-lysyl-[protein] + acetyl-CoA = N(6)-biotinyl-L-lysyl-[protein] + malonyl-CoA. It functions in the pathway lipid metabolism; malonyl-CoA biosynthesis; malonyl-CoA from acetyl-CoA: step 1/1. In terms of biological role, component of the acetyl coenzyme A carboxylase (ACC) complex. Biotin carboxylase (BC) catalyzes the carboxylation of biotin on its carrier protein (BCCP) and then the CO(2) group is transferred by the transcarboxylase to acetyl-CoA to form malonyl-CoA. The sequence is that of Acetyl-coenzyme A carboxylase carboxyl transferase subunit beta, chloroplastic from Chlorella vulgaris (Green alga).